The primary structure comprises 277 residues: uncharacterized protein (277 aa).

The protein belongs to the BtpA family.

It localises to the mitochondrion. This is an uncharacterized protein from Caenorhabditis elegans.